A 70-amino-acid chain; its full sequence is NAD(P)H-quinone oxidoreductase subunit L (70 aa).

2 helical membrane-spanning segments follow: residues 2–22 (IVAL…PIAV) and 39–59 (LLMY…SPFA).

Belongs to the complex I NdhL subunit family. In terms of assembly, NDH-1 can be composed of about 15 different subunits; different subcomplexes with different compositions have been identified which probably have different functions.

It localises to the cellular thylakoid membrane. It catalyses the reaction a plastoquinone + NADH + (n+1) H(+)(in) = a plastoquinol + NAD(+) + n H(+)(out). It carries out the reaction a plastoquinone + NADPH + (n+1) H(+)(in) = a plastoquinol + NADP(+) + n H(+)(out). Functionally, NDH-1 shuttles electrons from an unknown electron donor, via FMN and iron-sulfur (Fe-S) centers, to quinones in the respiratory and/or the photosynthetic chain. The immediate electron acceptor for the enzyme in this species is believed to be plastoquinone. Couples the redox reaction to proton translocation, and thus conserves the redox energy in a proton gradient. Cyanobacterial NDH-1 also plays a role in inorganic carbon-concentration. This Nostoc punctiforme (strain ATCC 29133 / PCC 73102) protein is NAD(P)H-quinone oxidoreductase subunit L.